Reading from the N-terminus, the 101-residue chain is Urease subunit beta (101 aa).

This sequence belongs to the urease beta subunit family. As to quaternary structure, heterotrimer of UreA (gamma), UreB (beta) and UreC (alpha) subunits. Three heterotrimers associate to form the active enzyme.

It is found in the cytoplasm. It catalyses the reaction urea + 2 H2O + H(+) = hydrogencarbonate + 2 NH4(+). It participates in nitrogen metabolism; urea degradation; CO(2) and NH(3) from urea (urease route): step 1/1. This Psychromonas ingrahamii (strain DSM 17664 / CCUG 51855 / 37) protein is Urease subunit beta.